A 137-amino-acid polypeptide reads, in one-letter code: Large-conductance mechanosensitive channel (137 aa).

2 helical membrane-spanning segments follow: residues 10–30 (FAMR…AAFG) and 76–96 (GVFI…FVAI).

It belongs to the MscL family. Homopentamer.

It is found in the cell inner membrane. In terms of biological role, channel that opens in response to stretch forces in the membrane lipid bilayer. May participate in the regulation of osmotic pressure changes within the cell. In Salmonella choleraesuis (strain SC-B67), this protein is Large-conductance mechanosensitive channel.